The following is a 333-amino-acid chain: Adenosine deaminase (333 aa).

Positions 12 and 14 each coordinate Zn(2+). Substrate contacts are provided by His14, Asp16, and Gly170. His197 contributes to the Zn(2+) binding site. The active-site Proton donor is the Glu200. Asp278 is a Zn(2+) binding site. Asp279 contributes to the substrate binding site.

It belongs to the metallo-dependent hydrolases superfamily. Adenosine and AMP deaminases family. Adenosine deaminase subfamily. The cofactor is Zn(2+).

The enzyme catalyses adenosine + H2O + H(+) = inosine + NH4(+). It carries out the reaction 2'-deoxyadenosine + H2O + H(+) = 2'-deoxyinosine + NH4(+). Its function is as follows. Catalyzes the hydrolytic deamination of adenosine and 2-deoxyadenosine. The chain is Adenosine deaminase from Shigella dysenteriae serotype 1 (strain Sd197).